The following is a 573-amino-acid chain: Sulfate adenylyltransferase (573 aa).

The N-terminal stretch occupies residues 1–169 (MANSPHGGVL…IEAVNKLNHY (169 aa)). A catalytic region spans residues 170–394 (DYVALRYTPA…LRESSPPRHT (225 aa)). A sulfate-binding site is contributed by Gln197. ATP contacts are provided by residues 197-200 (QTRN) and 291-294 (GRDH). Active-site residues include Thr198, Arg199, and Asn200. Residue Arg199 coordinates sulfate. Position 295 (Ala295) interacts with sulfate. Val333 is an ATP binding site. Positions 395–573 (QGFTVFLTGY…LETEGFFDRA (179 aa)) are allosteric regulation domain; adenylyl-sulfate kinase-like. Residues 434–437 (DTVR), Arg451, 477–478 (IA), and Arg515 contribute to the 3'-phosphoadenylyl sulfate site.

In the N-terminal section; belongs to the sulfate adenylyltransferase family. It in the C-terminal section; belongs to the APS kinase family. As to quaternary structure, homohexamer. Dimer of trimers.

It is found in the cytoplasm. The enzyme catalyses sulfate + ATP + H(+) = adenosine 5'-phosphosulfate + diphosphate. The protein operates within sulfur metabolism; hydrogen sulfide biosynthesis; sulfite from sulfate: step 1/3. Allosterically inhibited by 3'-phosphoadenosine 5'-phosphosulfate (PAPS). Its function is as follows. Catalyzes the first intracellular reaction of sulfate assimilation, forming adenosine-5'-phosphosulfate (APS) from inorganic sulfate and ATP. Plays an important role in sulfate activation as a component of the biosynthesis pathway of sulfur-containing amino acids. This chain is Sulfate adenylyltransferase, found in Aspergillus oryzae (strain ATCC 42149 / RIB 40) (Yellow koji mold).